We begin with the raw amino-acid sequence, 522 residues long: 5,6-dihydroxyindole-2-carboxylic acid oxidase (522 aa).

A signal peptide spans 1–21 (MLRTSCGGMLLLVHALGLVRA). Residues 22–470 (QFPRACVTPE…RPLTPTQIVT (449 aa)) lie on the Lumenal, melanosome side of the membrane. 5 cysteine pairs are disulfide-bonded: Cys-27/Cys-38, Cys-39/Cys-59, Cys-50/Cys-89, Cys-91/Cys-100, and Cys-103/Cys-112. 2 N-linked (GlcNAc...) asparagine glycosylation sites follow: Asn-164 and Asn-171. Zn(2+) is bound by residues His-182, His-205, and His-214. 2 disulfides stabilise this stretch: Cys-248-Cys-251 and Cys-280-Cys-293. Residue Asn-294 is glycosylated (N-linked (GlcNAc...) asparagine). Zn(2+) is bound by residues His-367 and His-371. Asn-375 is a glycosylation site (N-linked (GlcNAc...) asparagine). Position 394 (His-394) interacts with Zn(2+). A helical membrane pass occupies residues 471 to 491 (VAVVAALLLVAIIFAASTCVV). Residues 492-522 (HLRGNRTEGRQPLLGDQYQRYEDHNKTQSVV) are Cytoplasmic-facing.

It belongs to the tyrosinase family. Requires Cu(2+) as cofactor. Zn(2+) is required as a cofactor.

The protein resides in the melanosome membrane. It catalyses the reaction 2 5,6-dihydroxyindole-2-carboxylate + O2 = 2 indole-5,6-quinone-2-carboxylate + 2 H2O. The protein operates within pigment biosynthesis; melanin biosynthesis. Functionally, plays a role in melanin biosynthesis. Catalyzes the oxidation of 5,6-dihydroxyindole-2-carboxylic acid (DHICA) into indole-5,6-quinone-2-carboxylic acid. May regulate or influence the type of melanin synthesized. Also to a lower extent, capable of hydroxylating tyrosine and producing melanin. The polypeptide is 5,6-dihydroxyindole-2-carboxylic acid oxidase (tyrp1) (Carassius auratus (Goldfish)).